We begin with the raw amino-acid sequence, 439 residues long: Enolase 1-1 (439 aa).

Residue T85 is modified to Phosphothreonine. H159 and E168 together coordinate substrate. E211 serves as the catalytic Proton donor. Position 246 (D246) interacts with Mg(2+). S249 and S250 each carry phosphoserine. Phosphotyrosine is present on Y253. Substrate contacts are provided by E295 and D320. 2 residues coordinate Mg(2+): E295 and D320. Residue K345 is the Proton acceptor of the active site. Residue S351 is modified to Phosphoserine. Position 353 is a phosphothreonine (T353). S355 bears the Phosphoserine mark. Residues 372-375 (SHRS) and K396 each bind substrate. The residue at position 421 (S421) is a Phosphoserine.

The protein belongs to the enolase family. As to quaternary structure, homodimer. The cofactor is Mg(2+).

It localises to the cytoplasm. The catalysed reaction is (2R)-2-phosphoglycerate = phosphoenolpyruvate + H2O. It functions in the pathway carbohydrate degradation; glycolysis; pyruvate from D-glyceraldehyde 3-phosphate: step 4/5. The protein is Enolase 1-1 (eno101) of Schizosaccharomyces pombe (strain 972 / ATCC 24843) (Fission yeast).